Here is a 588-residue protein sequence, read N- to C-terminus: Proteasome-associated ATPase (588 aa).

Basic and acidic residues predominate over residues 1–10 (MAAHDDDMNR). The disordered stretch occupies residues 1–23 (MAAHDDDMNRGIRPGRGSEDPAG). A coiled-coil region spans residues 47-94 (RILEERIVELQTNLAGVSAQNERLAGTLREARDQIVALKEEVDRLAQP). 276 to 281 (GCGKTL) is an ATP binding site. A docks into pockets in the proteasome alpha-ring region spans residues 587-588 (YL).

Belongs to the AAA ATPase family. In terms of assembly, homohexamer. Assembles into a hexameric ring structure that caps the 20S proteasome core. Strongly interacts with the prokaryotic ubiquitin-like protein Pup through a hydrophobic interface; the interacting region of ARC lies in its N-terminal coiled-coil domain. There is one Pup binding site per ARC hexamer ring. Upon ATP-binding, the C-terminus of ARC interacts with the alpha-rings of the proteasome core, possibly by binding to the intersubunit pockets.

Its pathway is protein degradation; proteasomal Pup-dependent pathway. In terms of biological role, ATPase which is responsible for recognizing, binding, unfolding and translocation of pupylated proteins into the bacterial 20S proteasome core particle. May be essential for opening the gate of the 20S proteasome via an interaction with its C-terminus, thereby allowing substrate entry and access to the site of proteolysis. Thus, the C-termini of the proteasomal ATPase may function like a 'key in a lock' to induce gate opening and therefore regulate proteolysis. In Streptomyces coelicolor (strain ATCC BAA-471 / A3(2) / M145), this protein is Proteasome-associated ATPase.